The following is a 291-amino-acid chain: Sulfate transport system permease protein CysW (291 aa).

Over 1-22 (MAEVTQLKRYDARPINWGKWFL) the chain is Cytoplasmic. Residues 23–43 (IGIGMLVSAFILLVPMIYIFV) form a helical membrane-spanning segment. Over 44 to 69 (QAFSKGLMPVLQNLADPDMLHAIWLT) the chain is Periplasmic. Residues 66–270 (IWLTVMIALI…MAIITLFLKS (205 aa)) enclose the ABC transmembrane type-1 domain. The helical transmembrane segment at 70–90 (VMIALIAVPVNLVFGILLAWL) threads the bilayer. Residues 91-104 (VTRFNFPGRQLLLT) are Cytoplasmic-facing. The helical transmembrane segment at 105-125 (LLDIPFAVSPVVAGLVYLLFY) threads the bilayer. At 126-141 (GSNGPLGGWLDEHNLQ) the chain is on the periplasmic side. A helical transmembrane segment spans residues 142 to 162 (IMFSWPGMVLVTIFVTCPFVV). Residues 163-200 (RELVPVMLSQGSQEDEAAILLGASGWQMFRRVTLPNIR) are Cytoplasmic-facing. Residues 201–221 (WALLYGVVLTNARAIGEFGAV) traverse the membrane as a helical segment. At 222–247 (SVVSGSIRGETLSLPLQIELLEQDYN) the chain is on the periplasmic side. Residues 248–268 (TVGSFTAAALLTLMAIITLFL) form a helical membrane-spanning segment. Residues 269–291 (KSMLQWRLENQEKRAQQEEHHEH) are Cytoplasmic-facing.

This sequence belongs to the binding-protein-dependent transport system permease family. CysTW subfamily. In terms of assembly, the complex is composed of two ATP-binding proteins (CysA), two transmembrane proteins (CysT and CysW) and a solute-binding protein (CysP).

The protein localises to the cell inner membrane. Its function is as follows. Part of the ABC transporter complex CysAWTP (TC 3.A.1.6.1) involved in sulfate/thiosulfate import. Probably responsible for the translocation of the substrate across the membrane. The protein is Sulfate transport system permease protein CysW (cysW) of Escherichia coli O6:H1 (strain CFT073 / ATCC 700928 / UPEC).